The sequence spans 283 residues: Dihydropteroate synthase type-1 (283 aa).

The region spanning 6–262 (VTVFGILNLT…APGDLRSAIT (257 aa)) is the Pterin-binding domain. Mg(2+) is bound at residue asparagine 13. (7,8-dihydropterin-6-yl)methyl diphosphate-binding positions include aspartate 86, asparagine 105, aspartate 177, lysine 216, and 250–252 (RTH).

This sequence belongs to the DHPS family. Homodimer or homotrimer. The cofactor is Mg(2+).

The enzyme catalyses (7,8-dihydropterin-6-yl)methyl diphosphate + 4-aminobenzoate = 7,8-dihydropteroate + diphosphate. It functions in the pathway cofactor biosynthesis; tetrahydrofolate biosynthesis; 7,8-dihydrofolate from 2-amino-4-hydroxy-6-hydroxymethyl-7,8-dihydropteridine diphosphate and 4-aminobenzoate: step 1/2. Its function is as follows. Catalyzes the condensation of para-aminobenzoate (pABA) with 6-hydroxymethyl-7,8-dihydropterin diphosphate (DHPt-PP) to form 7,8-dihydropteroate (H2Pte), the immediate precursor of folate derivatives. Implicated in resistance to sulfonamide. The sequence is that of Dihydropteroate synthase type-1 (sulI) from Mycolicibacterium fortuitum (Mycobacterium fortuitum).